Consider the following 434-residue polypeptide: CinA-like protein (434 aa).

The protein belongs to the CinA family.

This chain is CinA-like protein, found in Mycolicibacterium paratuberculosis (strain ATCC BAA-968 / K-10) (Mycobacterium paratuberculosis).